The following is a 577-amino-acid chain: Thiol:disulfide interchange protein DsbD (577 aa).

The N-terminal stretch at 1 to 23 (MAQRIFTLIFLLWTAVGTPQVAA) is a signal peptide. 2 disulfide bridges follow: Cys131–Cys137 and Cys194–Cys316. 7 helical membrane passes run 182–202 (ALLI…YPLI), 225–245 (YVQG…AAGL), 255–275 (YILI…FGLY), 308–328 (LAGL…LLYI), 338–358 (GGTL…VTLF), 369–389 (WMQY…VFLL), and 396–416 (AWGI…ALML). Residues 437–577 (VISAKPLQDW…FQAHLQKFSP (141 aa)) form the Thioredoxin domain. An intrachain disulfide couples Cys492 to Cys495.

Belongs to the thioredoxin family. DsbD subfamily.

Its subcellular location is the cell inner membrane. The catalysed reaction is [protein]-dithiol + NAD(+) = [protein]-disulfide + NADH + H(+). It carries out the reaction [protein]-dithiol + NADP(+) = [protein]-disulfide + NADPH + H(+). In terms of biological role, required to facilitate the formation of correct disulfide bonds in some periplasmic proteins and for the assembly of the periplasmic c-type cytochromes. Acts by transferring electrons from cytoplasmic thioredoxin to the periplasm. This transfer involves a cascade of disulfide bond formation and reduction steps. The chain is Thiol:disulfide interchange protein DsbD from Pectobacterium atrosepticum (strain SCRI 1043 / ATCC BAA-672) (Erwinia carotovora subsp. atroseptica).